The sequence spans 208 residues: Small ribosomal subunit protein uS4B (208 aa).

Residues Lys-95–Ala-160 form the S4 RNA-binding domain.

This sequence belongs to the universal ribosomal protein uS4 family. Part of the 30S ribosomal subunit. Contacts protein S5. The interaction surface between S4 and S5 is involved in control of translational fidelity.

In terms of biological role, one of the primary rRNA binding proteins, it binds directly to 16S rRNA where it nucleates assembly of the body of the 30S subunit. Its function is as follows. With S5 and S12 plays an important role in translational accuracy. In Bdellovibrio bacteriovorus (strain ATCC 15356 / DSM 50701 / NCIMB 9529 / HD100), this protein is Small ribosomal subunit protein uS4B.